A 218-amino-acid polypeptide reads, in one-letter code: MSRSYYRTRIKFCGMTRAGDVRLAGELGVDAVGFIFARESSRRVAPAEARAMRQAIAPMVDVVALFRNNSKEEVREVLRTVRPTLLQFHGEEDESFCRSFNMPYLKAIAMGGREEVNARTLQLRYPSAAGFLFDSHAPGGGGGTGVAFDWSRVPTGLHRPFLLAGGLNPENVYDAVLATLPWGVDVSSGIELEPGIKDGYRMRTFVEEVRRADCTVLE.

The protein belongs to the TrpF family.

It catalyses the reaction N-(5-phospho-beta-D-ribosyl)anthranilate = 1-(2-carboxyphenylamino)-1-deoxy-D-ribulose 5-phosphate. It participates in amino-acid biosynthesis; L-tryptophan biosynthesis; L-tryptophan from chorismate: step 3/5. This chain is N-(5'-phosphoribosyl)anthranilate isomerase, found in Stenotrophomonas maltophilia (strain R551-3).